Consider the following 336-residue polypeptide: Ketol-acid reductoisomerase (NADP(+)) (336 aa).

One can recognise a KARI N-terminal Rossmann domain in the interval 5 to 185 (SKIYTDKDSN…GATRAGVIPT (181 aa)). Residues 28–31 (YGSQ), Ser-56, and 86–89 (DMVQ) contribute to the NADP(+) site. The active site involves His-111. Gly-137 provides a ligand contact to NADP(+). The region spanning 186 to 331 (TFKEETETDL…NQLKDLIQKG (146 aa)) is the KARI C-terminal knotted domain. Asp-194, Glu-198, Glu-230, and Glu-234 together coordinate Mg(2+). Ser-255 is a substrate binding site.

This sequence belongs to the ketol-acid reductoisomerase family. The cofactor is Mg(2+).

The enzyme catalyses (2R)-2,3-dihydroxy-3-methylbutanoate + NADP(+) = (2S)-2-acetolactate + NADPH + H(+). It catalyses the reaction (2R,3R)-2,3-dihydroxy-3-methylpentanoate + NADP(+) = (S)-2-ethyl-2-hydroxy-3-oxobutanoate + NADPH + H(+). Its pathway is amino-acid biosynthesis; L-isoleucine biosynthesis; L-isoleucine from 2-oxobutanoate: step 2/4. The protein operates within amino-acid biosynthesis; L-valine biosynthesis; L-valine from pyruvate: step 2/4. Involved in the biosynthesis of branched-chain amino acids (BCAA). Catalyzes an alkyl-migration followed by a ketol-acid reduction of (S)-2-acetolactate (S2AL) to yield (R)-2,3-dihydroxy-isovalerate. In the isomerase reaction, S2AL is rearranged via a Mg-dependent methyl migration to produce 3-hydroxy-3-methyl-2-ketobutyrate (HMKB). In the reductase reaction, this 2-ketoacid undergoes a metal-dependent reduction by NADPH to yield (R)-2,3-dihydroxy-isovalerate. The chain is Ketol-acid reductoisomerase (NADP(+)) from Saccharolobus islandicus (strain Y.N.15.51 / Yellowstone #2) (Sulfolobus islandicus).